We begin with the raw amino-acid sequence, 838 residues long: MPLSYQHFRKLLLLDDEAGPLEEELPRLADEGLNHRVAEDLNLGNPNVSIPWTHKVGNFTGLYSSTVPVFNPEWQPPSFPHIHLQEDIINRCQQYVGPLTVNEKRRLKLIMPARFYPNLTKYLPLDKGIKPYYPEHAVNHYFKTRHYLHTLWKAGILYKRETTRSASFCGSPYSWEQELQHQTSTRHGDESFCSQSSGILSRSPVGPCVRSQLKQSRLGLQPQQGSMARGKSGRSGSIRARVHPTTRRSFGVEPSGSGHIDNSASSASSCLHQSAVRKTAYSHLSTSKRQSSSGHAVEFHNIPPSSARSQSEGPIFSCWWLQFRNSKPCSDYCLTHIVNLLEDWGPCTEHGEHNIRIPRTPARVTGGVFLVDKNPHNTTESRLVVDFSQFSRGSTHVSWPKFAVPNLQSLTNLLSSNLSWLSLDVSAAFYHIPLHPAAMPHLLVGSSGLPRYVARLSSTSRNINYQHGTMQDLHDSCSRNLYVSLLLLYKTFGRKLHLYSHPIILGFRKIPMGVGLSPFLLAQFTSAICSVVRRAFPHCLAFSYMDDVVLGAKSVQHLESLFTSITNFLLSLGIHLNPNKTKRWGYSLNFMGYVIGSWGTLPQEHIVLKLKQCFRKLPVNRPIDWKVCQRIVGLLGFAAPFTQCGYPALMPLYACIQSKQAFTFSPTYKAFLCQQYLHLYPVARQRSGLCQVFADATPTGWGLAIGHRRMRGTFVAPLPIHTAELLAACFARSRSGAKLIGTDNSVVLSRKYTSFPWLLGCAANWILRGTSFVYVPSALNPADDPSRGRLGLYRPLLHLPFRPTTGRTSLYAVSPSVPSHLPSRVHFASPLHVAWRPP.

Positions 1–177 (MPLSYQHFRK…FCGSPYSWEQ (177 aa)) are terminal protein domain (TP). Positions 178-341 (ELQHQTSTRH…YCLTHIVNLL (164 aa)) are spacer. Disordered stretches follow at residues 215–238 (QSRLGLQPQQGSMARGKSGRSGSI) and 285–311 (STSKRQSSSGHAVEFHNIPPSSARSQS). Polar residues predominate over residues 285-294 (STSKRQSSSG). Positions 342–685 (EDWGPCTEHG…YLHLYPVARQ (344 aa)) are polymerase/reverse transcriptase domain (RT). In terms of domain architecture, Reverse transcriptase spans 352 to 595 (EHNIRIPRTP…YSLNFMGYVI (244 aa)). The Mg(2+) site is built by Asp-424, Asp-546, and Asp-547.

Belongs to the hepadnaviridae P protein family.

The enzyme catalyses DNA(n) + a 2'-deoxyribonucleoside 5'-triphosphate = DNA(n+1) + diphosphate. The catalysed reaction is Endonucleolytic cleavage to 5'-phosphomonoester.. Activated by host HSP70 and HSP40 in vitro to be able to bind the epsilon loop of the pgRNA. Because deletion of the RNase H region renders the protein partly chaperone-independent, the chaperones may be needed indirectly to relieve occlusion of the RNA-binding site by this domain. Inhibited by several reverse-transcriptase inhibitors: Lamivudine, Adefovir and Entecavir. Functionally, multifunctional enzyme that converts the viral RNA genome into dsDNA in viral cytoplasmic capsids. This enzyme displays a DNA polymerase activity that can copy either DNA or RNA templates, and a ribonuclease H (RNase H) activity that cleaves the RNA strand of RNA-DNA heteroduplexes in a partially processive 3'- to 5'-endonucleasic mode. Neo-synthesized pregenomic RNA (pgRNA) are encapsidated together with the P protein, and reverse-transcribed inside the nucleocapsid. Initiation of reverse-transcription occurs first by binding the epsilon loop on the pgRNA genome, and is initiated by protein priming, thereby the 5'-end of (-)DNA is covalently linked to P protein. Partial (+)DNA is synthesized from the (-)DNA template and generates the relaxed circular DNA (RC-DNA) genome. After budding and infection, the RC-DNA migrates in the nucleus, and is converted into a plasmid-like covalently closed circular DNA (cccDNA). The activity of P protein does not seem to be necessary for cccDNA generation, and is presumably released from (+)DNA by host nuclear DNA repair machinery. In Homo sapiens (Human), this protein is Protein P.